Consider the following 307-residue polypeptide: Putative S-adenosyl-L-methionine-dependent methyltransferase Mflv_5023 (307 aa).

Residues Asp-133 and 162-163 (DL) contribute to the S-adenosyl-L-methionine site. The interval 213–234 (SRLAVESVPSQQSADQDEMREK) is disordered.

Belongs to the UPF0677 family.

Its function is as follows. Exhibits S-adenosyl-L-methionine-dependent methyltransferase activity. The protein is Putative S-adenosyl-L-methionine-dependent methyltransferase Mflv_5023 of Mycolicibacterium gilvum (strain PYR-GCK) (Mycobacterium gilvum (strain PYR-GCK)).